We begin with the raw amino-acid sequence, 381 residues long: Chorismate synthase (381 aa).

NADP(+) contacts are provided by Arg39 and Arg45. FMN contacts are provided by residues 127-129 (RAS), 248-249 (QS), Gly293, 308-312 (KPIPT), and Arg334.

The protein belongs to the chorismate synthase family. In terms of assembly, homotetramer. Requires FMNH2 as cofactor.

It catalyses the reaction 5-O-(1-carboxyvinyl)-3-phosphoshikimate = chorismate + phosphate. Its pathway is metabolic intermediate biosynthesis; chorismate biosynthesis; chorismate from D-erythrose 4-phosphate and phosphoenolpyruvate: step 7/7. Functionally, catalyzes the anti-1,4-elimination of the C-3 phosphate and the C-6 proR hydrogen from 5-enolpyruvylshikimate-3-phosphate (EPSP) to yield chorismate, which is the branch point compound that serves as the starting substrate for the three terminal pathways of aromatic amino acid biosynthesis. This reaction introduces a second double bond into the aromatic ring system. This chain is Chorismate synthase, found in Caldicellulosiruptor saccharolyticus (strain ATCC 43494 / DSM 8903 / Tp8T 6331).